Reading from the N-terminus, the 404-residue chain is uncharacterized protein (404 aa).

A run of 12 helical transmembrane segments spans residues 3–23 (IIAK…PITE), 43–63 (TTQI…LTLG), 73–93 (PVVL…IFAP), 95–115 (IETL…GSVI), 135–155 (SLSP…GYII), 162–182 (YTFV…CKIL), 216–236 (IIGA…FIFI), 248–268 (KLAF…GYLI), 280–300 (ILGL…ALIL), 309–329 (IAVI…NLLI), 346–366 (TAGS…TFLV), and 377–397 (FALL…YILI).

It belongs to the major facilitator superfamily. Bcr/CmlA family.

It is found in the cell inner membrane. This is an uncharacterized protein from Rickettsia bellii (strain RML369-C).